A 610-amino-acid chain; its full sequence is DNA replication regulator sld2 (610 aa).

Residues 28 to 42 (WAQKNDGKKPSREAI) show a composition bias toward basic and acidic residues. 3 disordered regions span residues 28–115 (WAQK…AVHE), 127–261 (SPAV…ERSV), and 338–610 (EQGG…RRRR). 2 stretches are compositionally biased toward polar residues: residues 86 to 110 (ETSL…SQHY) and 232 to 261 (TKTS…ERSV). Acidic residues-rich tracts occupy residues 373–386 (VPEE…DEAA) and 414–428 (FDDE…EEDL). A compositionally biased stretch (basic residues) spans 442–464 (VFKKKGQKRTTRKVNMRPTRTKR). Residues 470-480 (AEEEDDGEEEH) show a composition bias toward acidic residues. Residues 493–503 (KNLDGDDHHTL) are compositionally biased toward basic and acidic residues. The segment covering 514 to 527 (EFDDGSEGEDEEAE) has biased composition (acidic residues). Basic and acidic residues predominate over residues 544–573 (SAKEKTKKDATTETKKKKGTKEGGDEEPAK).

Belongs to the SLD2 family.

The protein resides in the cytoplasm. It is found in the nucleus. Functionally, has a role in the initiation of DNA replication. Required at S-phase checkpoint. The protein is DNA replication regulator sld2 (drc-4) of Neurospora crassa (strain ATCC 24698 / 74-OR23-1A / CBS 708.71 / DSM 1257 / FGSC 987).